The chain runs to 283 residues: Protein-L-isoaspartate O-methyltransferase (283 aa).

The active site involves Ser-122.

This sequence belongs to the methyltransferase superfamily. L-isoaspartyl/D-aspartyl protein methyltransferase family.

It localises to the cytoplasm. The catalysed reaction is [protein]-L-isoaspartate + S-adenosyl-L-methionine = [protein]-L-isoaspartate alpha-methyl ester + S-adenosyl-L-homocysteine. Its function is as follows. Catalyzes the methyl esterification of L-isoaspartyl residues in peptides and proteins that result from spontaneous decomposition of normal L-aspartyl and L-asparaginyl residues. It plays a role in the repair and/or degradation of damaged proteins. In Leptothrix cholodnii (strain ATCC 51168 / LMG 8142 / SP-6) (Leptothrix discophora (strain SP-6)), this protein is Protein-L-isoaspartate O-methyltransferase.